A 336-amino-acid polypeptide reads, in one-letter code: tRNA(Ile)-lysidine synthase (336 aa).

Residue 40–45 coordinates ATP; that stretch reads SGGQDS.

The protein belongs to the tRNA(Ile)-lysidine synthase family.

The protein resides in the cytoplasm. It catalyses the reaction cytidine(34) in tRNA(Ile2) + L-lysine + ATP = lysidine(34) in tRNA(Ile2) + AMP + diphosphate + H(+). Its function is as follows. Ligates lysine onto the cytidine present at position 34 of the AUA codon-specific tRNA(Ile) that contains the anticodon CAU, in an ATP-dependent manner. Cytidine is converted to lysidine, thus changing the amino acid specificity of the tRNA from methionine to isoleucine. The protein is tRNA(Ile)-lysidine synthase of Prochlorococcus marinus subsp. pastoris (strain CCMP1986 / NIES-2087 / MED4).